The primary structure comprises 108 residues: SPbeta prophage-derived uncharacterized HTH-type transcriptional regulator YonR (108 aa).

One can recognise an HTH cro/C1-type domain in the interval 6–60 (LKKCRTSKGYSQQRMADFLGITRQGYGKYEIGKAEPDLKTLTKLSNILGVSTDFL). The segment at residues 17–36 (QQRMADFLGITRQGYGKYEI) is a DNA-binding region (H-T-H motif).

The polypeptide is SPbeta prophage-derived uncharacterized HTH-type transcriptional regulator YonR (yonR) (Bacillus subtilis (strain 168)).